A 357-amino-acid polypeptide reads, in one-letter code: Thiamine thiazole synthase 1, chloroplastic (357 aa).

The N-terminal 51 residues, 1 to 51 (MSISAAGVATGLGANVELKSNVGSSSSSVAGVRLFTSRKAQLRRCAAPATS), are a transit peptide targeting the chloroplast. Substrate is bound by residues Ala-103, 123-124 (EQ), Gly-131, and Ala-196. Position 225 is a 2,3-didehydroalanine (Cys) (Cys-225). Substrate-binding positions include Asp-227, His-242, Met-294, and 304–306 (RMG).

Belongs to the THI4 family. As to quaternary structure, homooctamer. Fe cation is required as a cofactor. In terms of processing, during the catalytic reaction, a sulfide is transferred from Cys-225 to a reaction intermediate, generating a dehydroalanine residue.

The protein localises to the plastid. It is found in the chloroplast. The enzyme catalyses [ADP-thiazole synthase]-L-cysteine + glycine + NAD(+) = [ADP-thiazole synthase]-dehydroalanine + ADP-5-ethyl-4-methylthiazole-2-carboxylate + nicotinamide + 3 H2O + 2 H(+). Functionally, involved in biosynthesis of the thiamine precursor thiazole. Catalyzes the conversion of NAD and glycine to adenosine diphosphate 5-(2-hydroxyethyl)-4-methylthiazole-2-carboxylic acid (ADT), an adenylated thiazole intermediate. The reaction includes an iron-dependent sulfide transfer from a conserved cysteine residue of the protein to a thiazole intermediate. The enzyme can only undergo a single turnover, which suggests it is a suicide enzyme. May have additional roles in adaptation to various stress conditions and in DNA damage tolerance. The chain is Thiamine thiazole synthase 1, chloroplastic from Physcomitrium patens (Spreading-leaved earth moss).